Here is a 156-residue protein sequence, read N- to C-terminus: Cyclin-dependent protein kinase inhibitor SMR10 (156 aa).

Positions 52–90 (QDQDLEPKSQETNNCSRKEGATVKKEEEEEDDYCKTPTR) are disordered. Residues 67 to 77 (SRKEGATVKKE) show a composition bias toward basic and acidic residues.

Probable cyclin-dependent protein kinase (CDK) inhibitor that functions as a repressor of mitosis in the endoreduplication cell cycle. This is Cyclin-dependent protein kinase inhibitor SMR10 from Arabidopsis thaliana (Mouse-ear cress).